The chain runs to 216 residues: Imidazole glycerol phosphate synthase subunit HisH (216 aa).

The Glutamine amidotransferase type-1 domain maps to 2–216 (RVAIIDYGSG…LISNFLRWKP (215 aa)). The Nucleophile role is filled by C88. Residues H196 and E198 contribute to the active site.

Heterodimer of HisH and HisF.

The protein resides in the cytoplasm. The catalysed reaction is 5-[(5-phospho-1-deoxy-D-ribulos-1-ylimino)methylamino]-1-(5-phospho-beta-D-ribosyl)imidazole-4-carboxamide + L-glutamine = D-erythro-1-(imidazol-4-yl)glycerol 3-phosphate + 5-amino-1-(5-phospho-beta-D-ribosyl)imidazole-4-carboxamide + L-glutamate + H(+). It carries out the reaction L-glutamine + H2O = L-glutamate + NH4(+). Its pathway is amino-acid biosynthesis; L-histidine biosynthesis; L-histidine from 5-phospho-alpha-D-ribose 1-diphosphate: step 5/9. Functionally, IGPS catalyzes the conversion of PRFAR and glutamine to IGP, AICAR and glutamate. The HisH subunit catalyzes the hydrolysis of glutamine to glutamate and ammonia as part of the synthesis of IGP and AICAR. The resulting ammonia molecule is channeled to the active site of HisF. The sequence is that of Imidazole glycerol phosphate synthase subunit HisH from Agrobacterium fabrum (strain C58 / ATCC 33970) (Agrobacterium tumefaciens (strain C58)).